The following is a 540-amino-acid chain: uncharacterized protein (540 aa).

The N-terminal stretch at 1-20 (MSVSYRGPRWSSFVHVSQHS) is a signal peptide.

It belongs to the TP096X family.

This is an uncharacterized protein from Treponema pallidum (strain Nichols).